A 299-amino-acid polypeptide reads, in one-letter code: Ankyrin repeat domain-containing protein 54 (299 aa).

The tract at residues 1–27 (MAATGGGAEDESRSGRSSSEGECAVAP) is disordered. An N-acetylalanine modification is found at A2. S62 is modified (phosphoserine). The Nuclear localization signal (NLS) motif lies at 98 to 116 (RRLGPTGKEVHALKRLRDS). 4 ANK repeats span residues 108–137 (HALK…DPCA), 141–170 (KGRT…DPNQ), 174–203 (LGNT…RVDA), and 207–239 (AGRT…EVKQ). The LYN-binding stretch occupies residues 140–240 (DKGRTALHFA…EAVRLEVKQI (101 aa)). The short motif at 282–292 (LLASFTSLSLQ) is the Nuclear export signal (NES) element.

In terms of assembly, interacts (via ankyrin repeat region) with LYN (via SH3-domain) in an activation-independent status of LYN. Forms a multiprotein complex with LYN and HCLS1. Interacts with TSN2, VAV1, DBNL and LASP1.

The protein localises to the nucleus. It localises to the cytoplasm. Its subcellular location is the midbody. Functionally, plays an important role in regulating intracellular signaling events associated with erythroid terminal differentiation. The chain is Ankyrin repeat domain-containing protein 54 (Ankrd54) from Rattus norvegicus (Rat).